Reading from the N-terminus, the 485-residue chain is Glutamyl-tRNA(Gln) amidotransferase subunit A (485 aa).

Catalysis depends on charge relay system residues Lys79 and Ser154. Ser178 (acyl-ester intermediate) is an active-site residue.

The protein belongs to the amidase family. GatA subfamily. In terms of assembly, heterotrimer of A, B and C subunits.

It catalyses the reaction L-glutamyl-tRNA(Gln) + L-glutamine + ATP + H2O = L-glutaminyl-tRNA(Gln) + L-glutamate + ADP + phosphate + H(+). Allows the formation of correctly charged Gln-tRNA(Gln) through the transamidation of misacylated Glu-tRNA(Gln) in organisms which lack glutaminyl-tRNA synthetase. The reaction takes place in the presence of glutamine and ATP through an activated gamma-phospho-Glu-tRNA(Gln). This chain is Glutamyl-tRNA(Gln) amidotransferase subunit A, found in Desulforamulus reducens (strain ATCC BAA-1160 / DSM 100696 / MI-1) (Desulfotomaculum reducens).